We begin with the raw amino-acid sequence, 290 residues long: PIH1 domain-containing protein 1 (290 aa).

A compositionally biased stretch (polar residues) spans Glu-34–Pro-50. Residues Glu-34–Gly-53 are disordered. Ser-173 carries the phosphoserine modification.

This sequence belongs to the PIH1 family. Component of the R2TP complex composed at least of RUVBL1, RUVBL2, RPAP3 and PIHD1. Component of the PAQosome complex which is responsible for the biogenesis of several protein complexes and which consists of R2TP complex members RUVBL1, RUVBL2, RPAP3 and PIH1D1, URI complex members PFDN2, PFDN6, PDRG1, UXT and URI1 as well as ASDURF, POLR2E and DNAAF10/WDR92. Interacts with phosphorylated TELO2 and mediates interaction of TELO2 with the R2TP complex. Interacts with phosphorylated ECD, EFTUD2/SNRP116, RPB1 and UBR5 and with RPB1 in a phosphorylation-independent manner. Interacts with the core C/D box snoRNP particle components NOP58 and FBL and with RUVBL1/TIP49. Interacts with RPAP3 and DNAAF10. Interacts with histone H4 and with SWI/SNF complex member SMARCB1/SNF5. Interacts with the mTORC1 complex member RPTOR. Interacts with MSL1.

It localises to the nucleus. Its function is as follows. Involved in the assembly of C/D box small nucleolar ribonucleoprotein (snoRNP) particles. Recruits the SWI/SNF complex to the core promoter of rRNA genes and enhances pre-rRNA transcription. Mediates interaction of TELO2 with the R2TP complex which is necessary for the stability of MTOR and SMG1. Positively regulates the assembly and activity of the mTORC1 complex. The polypeptide is PIH1 domain-containing protein 1 (PIH1D1) (Bos taurus (Bovine)).